Reading from the N-terminus, the 215-residue chain is Pyrrolidone-carboxylate peptidase 1 (215 aa).

Active-site residues include glutamate 80, cysteine 143, and histidine 167.

This sequence belongs to the peptidase C15 family. In terms of assembly, homotetramer.

The protein resides in the cytoplasm. It catalyses the reaction Release of an N-terminal pyroglutamyl group from a polypeptide, the second amino acid generally not being Pro.. Removes 5-oxoproline from various penultimate amino acid residues except L-proline. The chain is Pyrrolidone-carboxylate peptidase 1 from Ralstonia nicotianae (strain ATCC BAA-1114 / GMI1000) (Ralstonia solanacearum).